The sequence spans 4749 residues: Dynein heavy chain domain-containing protein 1 (4749 aa).

The span at 1–18 (MKPHSQTSPPSLPMPSTS) shows a compositional bias: low complexity. Disordered stretches follow at residues 1–27 (MKPH…TQKP), 275–308 (ESSD…KKSS), and 2690–2785 (ESLA…KLQS). The span at 2696-2716 (CEEEEVEEEKVPEVESEEEIA) shows a compositional bias: acidic residues. Polar residues predominate over residues 2738 to 2749 (QATTGSFLSENS). Residues 3197 to 3224 (CQHQESLIENLVRQHDALKAQQEVFLEQ) are a coiled coil. Positions 3568–3667 (PPKQNRSLEP…SLPSCLTVLS (100 aa)) are disordered. Over residues 3578 to 3593 (SPKESKEKFHVTKQDS) the composition is skewed to basic and acidic residues. Positions 3594–3636 (GDNTEDELEDENNEEEDEANEQRKEQKAEENKIQGENEQEVQE) form a coiled coil. Positions 3595-3612 (DNTEDELEDENNEEEDEA) are enriched in acidic residues. Positions 3613–3628 (NEQRKEQKAEENKIQG) are enriched in basic and acidic residues. Residues 3644–3655 (ESSGSHSSLPSE) show a composition bias toward low complexity. The segment covering 3656 to 3667 (TQSLPSCLTVLS) has biased composition (polar residues). Coiled-coil stretches lie at residues 3818–3838 (MVRT…LEDQ) and 4431–4451 (ERQL…LQAL).

The protein belongs to the dynein heavy chain family. In terms of tissue distribution, expressed in spermatozoa (at protein level).

It localises to the cell projection. Its subcellular location is the cilium. The protein localises to the flagellum. Essential for the normal function of sperm flagella axonemes. The chain is Dynein heavy chain domain-containing protein 1 (Dnhd1) from Mus musculus (Mouse).